The chain runs to 650 residues: Outer capsid protein VP4 (650 aa).

The N-myristoyl glycine; by host moiety is linked to residue G2. 3 N-linked (GlcNAc...) asparagine; by host glycosylation sites follow: N110, N407, and N493.

It belongs to the aquareoviridae outer capsid VP4 protein family. In terms of assembly, interacts with VP6 and VP7. Cleaved during the endosomal proteolytic disassembly of the outer capsid. Post-translationally, N-terminally myristoylated. This acylation is essential for the membrane fusion activity.

The protein localises to the virion. Functionally, interacts with VP7 to form the outer icosahedral capsid with an incomplete T=13 symmetry, about 80 nm in diameter, and consisting of 200 VP4-VP7 trimers. Myristoylated N-terminal peptide may be released in the endosome and involved in permeabilization and delivery of transcriptionally active viral particles into the host cell cytoplasm (Potential). This chain is Outer capsid protein VP4 (S6), found in Ctenopharyngodon idella (Grass carp).